The chain runs to 424 residues: Calreticulin (424 aa).

The first 19 residues, Met-1–Ser-19, serve as a signal peptide directing secretion. Cys-105 and Cys-137 form a disulfide bridge. Residues Tyr-109, Lys-111, Tyr-128, and Asp-135 each contribute to the an alpha-D-glucoside site. 7 consecutive repeat copies span residues Ile-191–Leu-202, Asp-210–Asp-221, Asp-227–Asp-238, Pro-246–Glu-256, Gly-260–Pro-270, Gly-274–Pro-284, and Gly-288–Pro-298. Residues Ile-191 to Glu-256 form a 4 X 12 AA approximate repeats region. The tract at residues Gly-260–Pro-298 is 3 X 11 AA approximate repeats. Position 318 (Glu-318) interacts with an alpha-D-glucoside. Positions Arg-370–Lys-385 are enriched in basic and acidic residues. Residues Arg-370–Leu-424 are disordered. Residues Glu-386 to Glu-400 are compositionally biased toward acidic residues. A compositionally biased stretch (basic and acidic residues) spans Asp-401–Leu-424. The Prevents secretion from ER signature appears at His-421–Leu-424.

The protein belongs to the calreticulin family.

It is found in the endoplasmic reticulum lumen. In terms of biological role, molecular calcium-binding chaperone promoting folding, oligomeric assembly and quality control in the ER via the calreticulin/calnexin cycle. This lectin may interact transiently with almost all of the monoglucosylated glycoproteins that are synthesized in the ER. This chain is Calreticulin (crtA), found in Dictyostelium discoideum (Social amoeba).